The following is a 540-amino-acid chain: Phosphomethylpyrimidine synthase (540 aa).

Substrate-binding positions include Asn-143, Met-172, Tyr-201, His-237, 257 to 259 (SRG), 298 to 301 (DGLR), and Glu-337. His-341 contributes to the Zn(2+) binding site. Tyr-364 is a substrate binding site. His-405 contacts Zn(2+). [4Fe-4S] cluster-binding residues include Cys-485, Cys-488, and Cys-493.

Belongs to the ThiC family. [4Fe-4S] cluster serves as cofactor.

It catalyses the reaction 5-amino-1-(5-phospho-beta-D-ribosyl)imidazole + S-adenosyl-L-methionine = 4-amino-2-methyl-5-(phosphooxymethyl)pyrimidine + CO + 5'-deoxyadenosine + formate + L-methionine + 3 H(+). It participates in cofactor biosynthesis; thiamine diphosphate biosynthesis. Functionally, catalyzes the synthesis of the hydroxymethylpyrimidine phosphate (HMP-P) moiety of thiamine from aminoimidazole ribotide (AIR) in a radical S-adenosyl-L-methionine (SAM)-dependent reaction. This chain is Phosphomethylpyrimidine synthase, found in Mycobacterium avium (strain 104).